Here is a 235-residue protein sequence, read N- to C-terminus: Exosome complex component Rrp4 (235 aa).

The 75-residue stretch at 63–137 (GDLVIGYVTD…DEYPIILTLK (75 aa)) folds into the S1 motif domain. A KH domain is found at 147–203 (GTVVEITPVKVPRVIGKRGSMLNTLMELGCDIVVGQNGRIWVKCKDPRDEVFLASLI).

The protein belongs to the RRP4 family. As to quaternary structure, component of the archaeal exosome complex. Forms a trimer of Rrp4 and/or Csl4 subunits. The trimer associates with a hexameric ring-like arrangement composed of 3 Rrp41-Rrp42 heterodimers.

It localises to the cytoplasm. Its function is as follows. Non-catalytic component of the exosome, which is a complex involved in RNA degradation. Increases the RNA binding and the efficiency of RNA degradation. Confers strong poly(A) specificity to the exosome. The sequence is that of Exosome complex component Rrp4 from Pyrobaculum aerophilum (strain ATCC 51768 / DSM 7523 / JCM 9630 / CIP 104966 / NBRC 100827 / IM2).